Here is a 179-residue protein sequence, read N- to C-terminus: Shikimate kinase (179 aa).

Glycine 15–serine 20 contributes to the ATP binding site. Mg(2+) is bound at residue threonine 19. Substrate-binding residues include aspartate 37, arginine 61, and glycine 83. Arginine 123 is an ATP binding site. Arginine 142 contributes to the substrate binding site.

The protein belongs to the shikimate kinase family. In terms of assembly, monomer. Requires Mg(2+) as cofactor.

It localises to the cytoplasm. The catalysed reaction is shikimate + ATP = 3-phosphoshikimate + ADP + H(+). Its pathway is metabolic intermediate biosynthesis; chorismate biosynthesis; chorismate from D-erythrose 4-phosphate and phosphoenolpyruvate: step 5/7. Functionally, catalyzes the specific phosphorylation of the 3-hydroxyl group of shikimic acid using ATP as a cosubstrate. The polypeptide is Shikimate kinase (Coxiella burnetii (strain CbuG_Q212) (Coxiella burnetii (strain Q212))).